Consider the following 110-residue polypeptide: UPF0122 protein SP70585_1353 (110 aa).

The protein belongs to the UPF0122 family.

Might take part in the signal recognition particle (SRP) pathway. This is inferred from the conservation of its genetic proximity to ftsY/ffh. May be a regulatory protein. The protein is UPF0122 protein SP70585_1353 of Streptococcus pneumoniae (strain 70585).